Reading from the N-terminus, the 476-residue chain is Aspartyl/glutamyl-tRNA(Asn/Gln) amidotransferase subunit B (476 aa).

It belongs to the GatB/GatE family. GatB subfamily. In terms of assembly, heterotrimer of A, B and C subunits.

The catalysed reaction is L-glutamyl-tRNA(Gln) + L-glutamine + ATP + H2O = L-glutaminyl-tRNA(Gln) + L-glutamate + ADP + phosphate + H(+). The enzyme catalyses L-aspartyl-tRNA(Asn) + L-glutamine + ATP + H2O = L-asparaginyl-tRNA(Asn) + L-glutamate + ADP + phosphate + 2 H(+). In terms of biological role, allows the formation of correctly charged Asn-tRNA(Asn) or Gln-tRNA(Gln) through the transamidation of misacylated Asp-tRNA(Asn) or Glu-tRNA(Gln) in organisms which lack either or both of asparaginyl-tRNA or glutaminyl-tRNA synthetases. The reaction takes place in the presence of glutamine and ATP through an activated phospho-Asp-tRNA(Asn) or phospho-Glu-tRNA(Gln). The chain is Aspartyl/glutamyl-tRNA(Asn/Gln) amidotransferase subunit B from Neisseria gonorrhoeae (strain ATCC 700825 / FA 1090).